An 801-amino-acid polypeptide reads, in one-letter code: Growth-differentiation transition protein 7 (801 aa).

The first 22 residues, 1-22, serve as a signal peptide directing secretion; sequence MIKTILIKLILLVIFCYHFLFA.

Belongs to the GDT family.

Its subcellular location is the secreted. This chain is Growth-differentiation transition protein 7 (gdt7), found in Dictyostelium discoideum (Social amoeba).